The following is a 135-amino-acid chain: Small ribosomal subunit protein uS9 (135 aa).

Positions 107–118 are enriched in basic and acidic residues; that stretch reads LVGDPRRTEPHK. The tract at residues 107-135 is disordered; sequence LVGDPRRTEPHKPNRSTKGPRAKRQKSYR. Positions 119 to 135 are enriched in basic residues; that stretch reads PNRSTKGPRAKRQKSYR.

This sequence belongs to the universal ribosomal protein uS9 family. Part of the 30S ribosomal subunit.

The polypeptide is Small ribosomal subunit protein uS9 (Pyrococcus furiosus (strain ATCC 43587 / DSM 3638 / JCM 8422 / Vc1)).